We begin with the raw amino-acid sequence, 87 residues long: Developmentally-regulated ectodermal protein (87 aa).

The signal sequence occupies residues 1–16; it reads MKRLLVLTLVSAILMA.

The chain is Developmentally-regulated ectodermal protein from Tripneustes gratilla (Hawaian sea urchin).